The primary structure comprises 160 residues: Small ribosomal subunit protein uS19 (160 aa).

This sequence belongs to the universal ribosomal protein uS19 family.

Functionally, protein S19 forms a complex with S13 that binds strongly to the 16S ribosomal RNA. The chain is Small ribosomal subunit protein uS19 from Pyrobaculum islandicum (strain DSM 4184 / JCM 9189 / GEO3).